The primary structure comprises 240 residues: MNAEKSPVTPNVDHEEIAKFEAVASRWWDLEGEFKPLHRINPLRLGYIAERAGGLFGKKVLDVGCGGGILAESMAREGATVTGLDMGFEPLQVAKLHALESGIQVNYVQETVEEHAAKHAGQYDVVTCMEMLEHVPDPQSVVRACAQLVKPGGDVFFSTLNRNGKSWLMAVVGAEYILRMVPKGTHDVKKFIKPAELLGWVDQTSLKERHMTGLHYNPITNTFKLGPGVDVNYMLHTQNK.

The S-adenosyl-L-methionine site is built by Arg44, Gly64, Asp85, and Met129.

The protein belongs to the methyltransferase superfamily. UbiG/COQ3 family.

The enzyme catalyses a 3-demethylubiquinol + S-adenosyl-L-methionine = a ubiquinol + S-adenosyl-L-homocysteine + H(+). It carries out the reaction a 3-(all-trans-polyprenyl)benzene-1,2-diol + S-adenosyl-L-methionine = a 2-methoxy-6-(all-trans-polyprenyl)phenol + S-adenosyl-L-homocysteine + H(+). It participates in cofactor biosynthesis; ubiquinone biosynthesis. In terms of biological role, O-methyltransferase that catalyzes the 2 O-methylation steps in the ubiquinone biosynthetic pathway. The chain is Ubiquinone biosynthesis O-methyltransferase from Escherichia fergusonii (strain ATCC 35469 / DSM 13698 / CCUG 18766 / IAM 14443 / JCM 21226 / LMG 7866 / NBRC 102419 / NCTC 12128 / CDC 0568-73).